The chain runs to 230 residues: 5'-methylthioadenosine/S-adenosylhomocysteine nucleosidase (230 aa).

Glu-12 (proton acceptor) is an active-site residue. Residues Gly-78, Met-153, and 174–175 (ME) contribute to the substrate site. Asp-198 serves as the catalytic Proton donor.

The protein belongs to the PNP/UDP phosphorylase family. MtnN subfamily.

It catalyses the reaction S-adenosyl-L-homocysteine + H2O = S-(5-deoxy-D-ribos-5-yl)-L-homocysteine + adenine. It carries out the reaction S-methyl-5'-thioadenosine + H2O = 5-(methylsulfanyl)-D-ribose + adenine. The enzyme catalyses 5'-deoxyadenosine + H2O = 5-deoxy-D-ribose + adenine. Its pathway is amino-acid biosynthesis; L-methionine biosynthesis via salvage pathway; S-methyl-5-thio-alpha-D-ribose 1-phosphate from S-methyl-5'-thioadenosine (hydrolase route): step 1/2. Catalyzes the irreversible cleavage of the glycosidic bond in both 5'-methylthioadenosine (MTA) and S-adenosylhomocysteine (SAH/AdoHcy) to adenine and the corresponding thioribose, 5'-methylthioribose and S-ribosylhomocysteine, respectively. Also cleaves 5'-deoxyadenosine, a toxic by-product of radical S-adenosylmethionine (SAM) enzymes, into 5-deoxyribose and adenine. The chain is 5'-methylthioadenosine/S-adenosylhomocysteine nucleosidase from Aeromonas salmonicida (strain A449).